The sequence spans 286 residues: uncharacterized protein (286 aa).

Residues 1-19 (MISKEYISLLSALLTKGYS) form the signal peptide.

This is an uncharacterized protein from Acidianus filamentous virus 2 (isolate Italy/Pozzuoli) (AFV-2).